The sequence spans 90 residues: Small ribosomal subunit protein uS15 (90 aa).

This sequence belongs to the universal ribosomal protein uS15 family. In terms of assembly, part of the 30S ribosomal subunit. Forms a bridge to the 50S subunit in the 70S ribosome, contacting the 23S rRNA.

Its function is as follows. One of the primary rRNA binding proteins, it binds directly to 16S rRNA where it helps nucleate assembly of the platform of the 30S subunit by binding and bridging several RNA helices of the 16S rRNA. Forms an intersubunit bridge (bridge B4) with the 23S rRNA of the 50S subunit in the ribosome. In Paraburkholderia xenovorans (strain LB400), this protein is Small ribosomal subunit protein uS15.